We begin with the raw amino-acid sequence, 151 residues long: Large ribosomal subunit protein bL9 (151 aa).

Belongs to the bacterial ribosomal protein bL9 family.

Binds to the 23S rRNA. The sequence is that of Large ribosomal subunit protein bL9 from Azoarcus sp. (strain BH72).